A 309-amino-acid chain; its full sequence is Spermatid maturation protein 1 (309 aa).

A helical membrane pass occupies residues 29 to 49; that stretch reads VLLLLGLIICINISINIVTLL. Positions 209–231 are disordered; sequence PPPPSPEAPSHKNGGEGAVPEAE. A coiled-coil region spans residues 259–285; that stretch reads RIVYDARDMRRRLRELTREVEALSGCY.

It is found in the membrane. Its subcellular location is the cytoplasm. Functionally, required for proper cytoplasm removal during spermatogenesis. This Homo sapiens (Human) protein is Spermatid maturation protein 1 (SPEM1).